The sequence spans 552 residues: MTLDSYNIFNDEYLFNMPLSPLPKVLGSFETVQSVLTLTTPTLTPTTTRNIEDTIGHLLSDTQPDRGAGCAGFAVPKVLPNAMGAIEALGMGIPSGVNSLPIQPAYDVNLAQGSDSEDSNASYNDTQMNEEQDTTDTSSAHTDSTSYQAGQIMAGSVNGGGVNNFTNVLAAVSSTRGAASVGSSNANTSNTPARRGGGRRPNRSTNMTPEEEQKRAVRRERNKQAAARCRKRRVDQTNELTEEVEQLEKRGDSMRKEIEALTMSKNQLEYCLAAHRPTCQKIRSDMLSVTTCNGLIAPAGLLSAGSSGSGASSHHNHNSNDSSNGTITGMDATLNSTGRSNSPLDLKPAANIDSLLLQHIKDEPLDGAIDSGSSLDQDGPPPSKRITLPPMSTMPHVHMSTLMTPTGASSGSLQTPITSTAPVGFGSAFPVTTNGSSINTINSISQNNMNSPTLNALNKVPKERPNTLAFQRPVGHMHLTLANNNKPGGPTQIQGVPIQTPSTGTFNFDSLMDGGTGLTPVSGPLVPNSSSANKHPLELPTPTAEPSKLVSL.

Disordered stretches follow at residues 110-145 and 177-234; these read LAQG…TDST and GAAS…KRRV. Over residues 111-127 the composition is skewed to polar residues; sequence AQGSDSEDSNASYNDTQ. Residues 135–145 show a composition bias toward low complexity; the sequence is TDTSSAHTDST. A compositionally biased stretch (polar residues) spans 177–192; sequence GAASVGSSNANTSNTP. In terms of domain architecture, bZIP spans 212 to 275; sequence EQKRAVRRER…NQLEYCLAAH (64 aa). Positions 214-233 are basic motif; it reads KRAVRRERNKQAAARCRKRR. The tract at residues 240–247 is leucine-zipper; it reads LTEEVEQL. The segment covering 304–325 has biased composition (low complexity); it reads AGSSGSGASSHHNHNSNDSSNG. Disordered regions lie at residues 304-346, 365-390, and 514-552; these read AGSS…PLDL, LDGA…TLPP, and GGTG…LVSL. Residues 333–343 are compositionally biased toward polar residues; that stretch reads TLNSTGRSNSP. A Phosphoserine modification is found at Ser342.

It belongs to the bZIP family. Fos subfamily. Homodimer. Heterodimer with Jra. The kay-Jra heterodimer binds more stably to the AP-1 site than either of the two proteins alone.

The protein localises to the nucleus. In terms of biological role, developmentally regulated transcription factor AP-1 binds and recognizes the enhancer DNA sequence: 5'-TGA[CG]TCA-3'. May play a role in the function or determination of a particular subset of cells in the developing embryo. It is able to carry out its function either independently of or in conjunction with Jra. The sequence is that of Transcription factor kayak from Drosophila yakuba (Fruit fly).